The primary structure comprises 226 residues: PKHD-type hydroxylase Pput_0892 (226 aa).

One can recognise a Fe2OG dioxygenase domain in the interval 78–178 (KVFPPLINCY…RYAAFFWTQS (101 aa)). Fe cation contacts are provided by histidine 96, aspartate 98, and histidine 159. Position 169 (arginine 169) interacts with 2-oxoglutarate.

Requires Fe(2+) as cofactor. L-ascorbate is required as a cofactor.

The polypeptide is PKHD-type hydroxylase Pput_0892 (Pseudomonas putida (strain ATCC 700007 / DSM 6899 / JCM 31910 / BCRC 17059 / LMG 24140 / F1)).